A 420-amino-acid chain; its full sequence is Tryptophan synthase beta chain (420 aa).

At Lys99 the chain carries N6-(pyridoxal phosphate)lysine.

Belongs to the TrpB family. As to quaternary structure, tetramer of two alpha and two beta chains. Pyridoxal 5'-phosphate serves as cofactor.

The catalysed reaction is (1S,2R)-1-C-(indol-3-yl)glycerol 3-phosphate + L-serine = D-glyceraldehyde 3-phosphate + L-tryptophan + H2O. Its pathway is amino-acid biosynthesis; L-tryptophan biosynthesis; L-tryptophan from chorismate: step 5/5. In terms of biological role, the beta subunit is responsible for the synthesis of L-tryptophan from indole and L-serine. This chain is Tryptophan synthase beta chain, found in Helicobacter hepaticus (strain ATCC 51449 / 3B1).